Here is a 404-residue protein sequence, read N- to C-terminus: Protrudin (404 aa).

The segment at 1 to 25 (MQSSDRDLSGPEASPSVMPEVLSEC) is disordered. Topologically, residues 1-63 (MQSSDRDLSG…LKDAGDGVRY (63 aa)) are cytoplasmic. Residues 1 to 92 (MQSSDRDLSG…LFLTLNEGAW (92 aa)) form a sufficient for homooligomerization region. The sufficient for localization to endoplasmic reticulum tubular network and for interactions with REEP1, REEP5, ATL1, ATL2, ATL3 and SPAST stretch occupies residues 1–205 (MQSSDRDLSG…LYLLPLCWVL (205 aa)). Residues 51-64 (LEPLKDAGDGVRYL) form a necessary for interaction with RAB11A and function in neurite outgrowth region. The helical transmembrane segment at 64-85 (LLRWQMPLCSLLTCLGLNILFL) threads the bilayer. The Lumenal segment spans residues 86–90 (TLNEG). The chain crosses the membrane as a helical span at residues 91 to 109 (AWYSVGALIISVPALLGYL). Residues 110–187 (QEVCRAQLPE…NPVVSSQFYG (78 aa)) lie on the Cytoplasmic side of the membrane. Positions 188–208 (ALLGMVCMLYLLPLCWVLALL) form an intramembrane region, helical. At 209–404 (NSTLFLGNGE…CASCNQTLSK (196 aa)) the chain is on the cytoplasmic side. The segment at 259 to 299 (DSTPAPTPTEDLTPGSVEEAEEAEPDEEFKDAIEEDDEGTP) is disordered. A necessary for interaction with KIF5A region spans residues 271–354 (TPGSVEEAEE…GCAATFSVLK (84 aa)). A compositionally biased stretch (acidic residues) spans 276 to 299 (EEAEEAEPDEEFKDAIEEDDEGTP). Positions 286–292 (EFKDAIE) are necessary for interaction with VAPA. An FYVE-type zinc finger spans residues 337–403 (TNNFGNCAGC…VCASCNQTLS (67 aa)). Cys-343, Cys-346, Cys-359, Cys-362, Cys-367, Cys-370, Cys-395, and Cys-398 together coordinate Zn(2+).

Can form homooligomers (monomers, dimers and tetramers). Interacts with FKBP8; may negatively regulate ZFYVE27 phosphorylation. Interacts with VAPA (via MSP domain); may regulate ZFYVE27 retention in the endoplasmic reticulum and its function in cell projections formation. Interacts with VAPB (via MSP domain). Interacts with RAB11A (GDP-bound form); regulates RAB11A. Interacts with RAB11B (GDP-bound form), REEP1, REEP5, ATL1, ATL2, ATL3, SPAST, SURF4, KIF5A, KIF5B, KIF5C and RTN3. In terms of processing, phosphorylated. Phosphorylation is induced by NGF through the MAPK/ERK pathway and modulates interaction with RAB11A.

The protein resides in the recycling endosome membrane. It is found in the endoplasmic reticulum membrane. The protein localises to the cell projection. It localises to the growth cone membrane. Its function is as follows. Key regulator of RAB11-dependent vesicular trafficking during neurite extension through polarized membrane transport. Promotes axonal elongation and contributes to the establishment of neuronal cell polarity. Involved in nerve growth factor-induced neurite formation in VAPA-dependent manner. Contributes to both the formation and stabilization of the tubular ER network. Involved in ER morphogenesis by regulating the sheet-to-tubule balance and possibly the density of tubule interconnections. Acts as an adapter protein that facilitates the interaction of KIF5A with VAPA, VAPB, SURF4, RAB11A, RAB11B and RTN3 and the ZFYVE27-KIF5A complex contributes to the transport of these proteins in neurons. Can induce formation of neurite-like membrane protrusions in non-neuronal cells in a KIF5A/B-dependent manner. This Rattus norvegicus (Rat) protein is Protrudin (Zfyve27).